Reading from the N-terminus, the 335-residue chain is MALPLDFEKPLFELETKIDELRTFSQEKDLDFSSEIATLEQKAEELRKKIYRDLTPWQQAQLARHPDRPNTIEYIRLLFEEFYEMKGDRLYGDDPAIVGGIARFQGRPVTVIGHVKGKDTKENIYRNFGMPHPEGYRKALRLMRQAAKFSRPIICFIDTPGAYCGIGAEERGQAEAIARNLLEMAALPVPIISVIIGEGGSGGALALGVADRLLMLEHAVYSVASPESAASILFKDASLAPQAAAAMGITAERLKDLKLIDRIVPEPSGGAHRNPIGTAKELATALSEEIENLLALSAQELVDSRYAKYRNLGLHCIEDASCGTFEAEATDASGT.

One can recognise a CoA carboxyltransferase C-terminal domain in the interval 38 to 292 (TLEQKAEELR…ATALSEEIEN (255 aa)).

It belongs to the AccA family. Acetyl-CoA carboxylase is a heterohexamer composed of biotin carboxyl carrier protein (AccB), biotin carboxylase (AccC) and two subunits each of ACCase subunit alpha (AccA) and ACCase subunit beta (AccD).

It is found in the cytoplasm. The enzyme catalyses N(6)-carboxybiotinyl-L-lysyl-[protein] + acetyl-CoA = N(6)-biotinyl-L-lysyl-[protein] + malonyl-CoA. It functions in the pathway lipid metabolism; malonyl-CoA biosynthesis; malonyl-CoA from acetyl-CoA: step 1/1. Component of the acetyl coenzyme A carboxylase (ACC) complex. First, biotin carboxylase catalyzes the carboxylation of biotin on its carrier protein (BCCP) and then the CO(2) group is transferred by the carboxyltransferase to acetyl-CoA to form malonyl-CoA. The protein is Acetyl-coenzyme A carboxylase carboxyl transferase subunit alpha of Heliobacterium modesticaldum (strain ATCC 51547 / Ice1).